A 131-amino-acid polypeptide reads, in one-letter code: Histone H2A.2 (131 aa).

An N-acetylserine modification is found at Ser2. Lys5 and Lys8 each carry N6-acetyllysine. At Gln106 the chain carries N5-methylglutamine. At Ser128 the chain carries Phosphoserine. Residues 128-129 (SQ) carry the [ST]-Q motif motif.

Belongs to the histone H2A family. The nucleosome is a histone octamer containing two molecules each of H2A, H2B, H3 and H4 assembled in one H3-H4 heterotetramer and two H2A-H2B heterodimers. The octamer wraps approximately 147 bp of DNA. Post-translationally, phosphorylated to form H2AS128ph (gamma-H2A) in response to DNA double-strand breaks (DSBs) generated by exogenous genotoxic agents and by stalled replication forks. Phosphorylation is dependent on the DNA damage checkpoint kinases MEC1/ATR and TEL1/ATM, spreads on either side of a detected DSB site and may mark the surrounding chromatin for recruitment of proteins required for DNA damage signaling and repair. Gamma-H2A is removed from the DNA prior to the strand invasion-primer extension step of the repair process and subsequently dephosphorylated by PPH3, a component of the histone H2A phosphatase complex (HTP-C). Dephosphorylation is necessary for efficient recovery from the DNA damage checkpoint. Acetylated by ESA1 to form H2AK4ac and H2AK7ac.

It is found in the nucleus. The protein resides in the chromosome. Its function is as follows. Core component of nucleosome which plays a central role in DNA double strand break (DSB) repair. Nucleosomes wrap and compact DNA into chromatin, limiting DNA accessibility to the cellular machineries which require DNA as a template. Histones thereby play a central role in transcription regulation, DNA repair, DNA replication and chromosomal stability. DNA accessibility is regulated via a complex set of post-translational modifications of histones, also called histone code, and nucleosome remodeling. The polypeptide is Histone H2A.2 (HTA2) (Candida glabrata (strain ATCC 2001 / BCRC 20586 / JCM 3761 / NBRC 0622 / NRRL Y-65 / CBS 138) (Yeast)).